A 363-amino-acid chain; its full sequence is MKESVIRKLEGLLERNEEVLALLGDASVIADQERFRALSKEYSQLEEVVAGFKAYQQALADLESAKEMLEEDDAEMREMAQEEIKAAKAELERLEAELQILLLPKDPNDDTNAFIEIRAGAGGDEAAIFAGDLFRMYSRYAEANRWQLEIMSSNEGEHGGFKEIIVKVSGEGAYGKLKFESGGHRVQRVPETESQGRVHTSAVTVVVMHEVPEAEAISINPADLKVDTFRSSGAGGQHVNKTDSAIRITHIPTGIVVECQDQRSQHKNRAQAMSVLAARIQAVEDEKRRSAEESTRRSLVASGDRSERVRTYNFPQGRVSEHRINLTLYRLNEVMEGDLDAILGPLMQEHQADLLAALADEQG.

At Gln-237 the chain carries N5-methylglutamine. Residues 284-296 (EDEKRRSAEESTR) are compositionally biased toward basic and acidic residues. The interval 284–305 (EDEKRRSAEESTRRSLVASGDR) is disordered.

This sequence belongs to the prokaryotic/mitochondrial release factor family. Methylated by PrmC. Methylation increases the termination efficiency of RF1.

It is found in the cytoplasm. In terms of biological role, peptide chain release factor 1 directs the termination of translation in response to the peptide chain termination codons UAG and UAA. In Shewanella sp. (strain MR-4), this protein is Peptide chain release factor 1.